A 466-amino-acid polypeptide reads, in one-letter code: 3-isopropylmalate dehydratase large subunit (466 aa).

C346, C406, and C409 together coordinate [4Fe-4S] cluster.

Belongs to the aconitase/IPM isomerase family. LeuC type 1 subfamily. As to quaternary structure, heterodimer of LeuC and LeuD. It depends on [4Fe-4S] cluster as a cofactor.

It catalyses the reaction (2R,3S)-3-isopropylmalate = (2S)-2-isopropylmalate. It participates in amino-acid biosynthesis; L-leucine biosynthesis; L-leucine from 3-methyl-2-oxobutanoate: step 2/4. In terms of biological role, catalyzes the isomerization between 2-isopropylmalate and 3-isopropylmalate, via the formation of 2-isopropylmaleate. The chain is 3-isopropylmalate dehydratase large subunit from Cytophaga hutchinsonii (strain ATCC 33406 / DSM 1761 / CIP 103989 / NBRC 15051 / NCIMB 9469 / D465).